The sequence spans 330 residues: Methionine import ATP-binding protein MetN (330 aa).

Positions 2–241 constitute an ABC transporter domain; the sequence is IAFRGVSKVY…PSTRLHQLCF (240 aa). Residue 38 to 45 coordinates ATP; it reads GQSGAGKS.

This sequence belongs to the ABC transporter superfamily. Methionine importer (TC 3.A.1.24) family. The complex is composed of two ATP-binding proteins (MetN), two transmembrane proteins (MetI) and a solute-binding protein (MetQ).

Its subcellular location is the cell inner membrane. The enzyme catalyses L-methionine(out) + ATP + H2O = L-methionine(in) + ADP + phosphate + H(+). The catalysed reaction is D-methionine(out) + ATP + H2O = D-methionine(in) + ADP + phosphate + H(+). Functionally, part of the ABC transporter complex MetNIQ involved in methionine import. Responsible for energy coupling to the transport system. The protein is Methionine import ATP-binding protein MetN of Myxococcus xanthus (strain DK1622).